Reading from the N-terminus, the 205-residue chain is Protease (205 aa).

Active-site residues include His-54, Asp-71, and Cys-122.

It belongs to the peptidase C5 family. As to quaternary structure, interacts with protease cofactor pVI-C; this interaction is necessary for protease activation.

The protein localises to the virion. It localises to the host nucleus. It carries out the reaction Cleaves proteins of the adenovirus and its host cell at two consensus sites: -Yaa-Xaa-Gly-Gly-|-Xaa- and -Yaa-Xaa-Gly-Xaa-|-Gly- (in which Yaa is Met, Ile or Leu, and Xaa is any amino acid).. Its activity is regulated as follows. Requires DNA and protease cofactor for maximal activation. Inside nascent virions, becomes partially activated by binding to the viral DNA, allowing it to cleave the cofactor that binds to the protease and fully activates it. Actin, like the viral protease cofactor, seems to act as a cofactor in the cleavage of cytokeratin 18 and of actin itself. Its function is as follows. Cleaves viral precursor proteins (pTP, pIIIa, pVI, pVII, pVIII, and pX) inside newly assembled particles giving rise to mature virions. Protease complexed to its cofactor slides along the viral DNA to specifically locate and cleave the viral precursors. Mature virions have a weakened organization compared to the unmature virions, thereby facilitating subsequent uncoating. Without maturation, the particle lacks infectivity and is unable to uncoat. Late in adenovirus infection, in the cytoplasm, may participate in the cytoskeleton destruction. Cleaves host cell cytoskeletal keratins K7 and K18. This is Protease from Homo sapiens (Human).